The chain runs to 101 residues: Small ribosomal subunit protein eS24 (101 aa).

It belongs to the eukaryotic ribosomal protein eS24 family.

The protein is Small ribosomal subunit protein eS24 of Methanosarcina barkeri (strain Fusaro / DSM 804).